The chain runs to 263 residues: 4-hydroxy-2-oxo-heptane-1,7-dioate aldolase (263 aa).

The Proton acceptor role is filled by H45. A substrate-binding site is contributed by Q147. Position 149 (E149) interacts with a divalent metal cation. Residues A174 and D175 each coordinate substrate. D175 is an a divalent metal cation binding site.

This sequence belongs to the HpcH/HpaI aldolase family. As to quaternary structure, homohexamer; trimer of dimers. A divalent metal cation serves as cofactor.

The enzyme catalyses 4-hydroxy-2-oxoheptanedioate = succinate semialdehyde + pyruvate. Its pathway is aromatic compound metabolism; 4-hydroxyphenylacetate degradation; pyruvate and succinate semialdehyde from 4-hydroxyphenylacetate: step 7/7. Functionally, catalyzes the reversible retro-aldol cleavage of 4-hydroxy-2-ketoheptane-1,7-dioate (HKHD) to pyruvate and succinic semialdehyde. This chain is 4-hydroxy-2-oxo-heptane-1,7-dioate aldolase, found in Salmonella typhimurium (strain LT2 / SGSC1412 / ATCC 700720).